Consider the following 340-residue polypeptide: Delta(1)-pyrroline-2-carboxylate reductase 1 (340 aa).

The Charge relay system role is filled by S50. The active-site Proton donor is H51. R55 provides a ligand contact to substrate. An NADP(+)-binding site is contributed by 123–127; the sequence is HFSAL. Position 163 (T163) interacts with substrate. 181 to 183 is a binding site for NADP(+); the sequence is DFA. Residue 189–190 coordinates substrate; that stretch reads RG. D191 serves as the catalytic Charge relay system. Residues 232–233 and 307–313 each bind NADP(+); these read HK and RLPSQRR.

The protein belongs to the LDH2/MDH2 oxidoreductase family. In terms of assembly, homodimer.

It catalyses the reaction L-proline + NAD(+) = 1-pyrroline-2-carboxylate + NADH + H(+). The enzyme catalyses L-proline + NADP(+) = 1-pyrroline-2-carboxylate + NADPH + H(+). Its function is as follows. Catalyzes the reduction of Delta(1)-pyrroline-2-carboxylate (Pyr2C) to L-proline, using NADPH as the electron donor. May be involved in a degradation pathway that converts trans-3-hydroxy-L-proline (t3LHyp) to L-proline. The chain is Delta(1)-pyrroline-2-carboxylate reductase 1 from Burkholderia ambifaria (strain ATCC BAA-244 / DSM 16087 / CCUG 44356 / LMG 19182 / AMMD) (Burkholderia cepacia (strain AMMD)).